Reading from the N-terminus, the 159-residue chain is Putative pre-16S rRNA nuclease (159 aa).

Belongs to the YqgF nuclease family.

It is found in the cytoplasm. Functionally, could be a nuclease involved in processing of the 5'-end of pre-16S rRNA. The sequence is that of Putative pre-16S rRNA nuclease from Synechococcus sp. (strain JA-3-3Ab) (Cyanobacteria bacterium Yellowstone A-Prime).